A 147-amino-acid polypeptide reads, in one-letter code: Myoglobin (147 aa).

The Globin domain maps to 2–137 (ADFEMVLKHW…VMTTIIADIE (136 aa)). His60 lines the nitrite pocket. His60 serves as a coordination point for O2. A heme b-binding site is contributed by His89.

The protein belongs to the globin family. As to quaternary structure, monomeric.

The protein resides in the cytoplasm. Its subcellular location is the sarcoplasm. The enzyme catalyses Fe(III)-heme b-[protein] + nitric oxide + H2O = Fe(II)-heme b-[protein] + nitrite + 2 H(+). It carries out the reaction H2O2 + AH2 = A + 2 H2O. Its function is as follows. Monomeric heme protein which primary function is to store oxygen and facilitate its diffusion within muscle tissues. Reversibly binds oxygen through a pentacoordinated heme iron and enables its timely and efficient release as needed during periods of heightened demand. Depending on the oxidative conditions of tissues and cells, and in addition to its ability to bind oxygen, it also has a nitrite reductase activity whereby it regulates the production of bioactive nitric oxide. Under stress conditions, like hypoxia and anoxia, it also protects cells against reactive oxygen species thanks to its pseudoperoxidase activity. The protein is Myoglobin (mb) of Makaira nigricans (Atlantic blue marlin).